Consider the following 629-residue polypeptide: Probable alpha-L-arabinofuranosidase A (629 aa).

Positions M1 to G25 are cleaved as a signal peptide. Residues N36, N51, N140, N152, N168, N171, N260, N494, and N534 are each glycosylated (N-linked (GlcNAc...) asparagine).

This sequence belongs to the glycosyl hydrolase 51 family.

It is found in the secreted. The catalysed reaction is Hydrolysis of terminal non-reducing alpha-L-arabinofuranoside residues in alpha-L-arabinosides.. Its pathway is glycan metabolism; L-arabinan degradation. In terms of biological role, alpha-L-arabinofuranosidase involved in the degradation of arabinoxylan, a major component of plant hemicellulose. Acts only on small linear 1,5-alpha-linked L-arabinofuranosyl oligosaccharides. This chain is Probable alpha-L-arabinofuranosidase A (abfA), found in Aspergillus flavus (strain ATCC 200026 / FGSC A1120 / IAM 13836 / NRRL 3357 / JCM 12722 / SRRC 167).